Consider the following 69-residue polypeptide: Dodecin (69 aa).

3 to 5 serves as a coordination point for FMN; the sequence is KVY. Residues Lys6, Arg28, and 32–34 contribute to the CoA site; that span reads TLR. FMN is bound by residues Asp37, Trp38, Arg45, Gln57, and Arg65. 65-67 contributes to the CoA binding site; it reads RLE.

The protein belongs to the dodecin family. In terms of assembly, homododecamer; four homotrimers assemble to form a dodecameric hollow sphere with an outer diameter of about 60 Angstroms. Flavin dimers are bound between subunits with a stoichiometry of 6 flavin dimers per dodecamer. Besides, trimeric coenzyme A molecules can be bound between subunits. A dodecamer can bind simultaneously 12 flavin and 12 coenzyme A molecules.

Its function is as follows. May function as storage protein that sequesters various flavins and other cofactors, thereby protecting the cell against undesirable reactions mediated by the free cofactors. Binds and sequesters FMN, FAD, lumiflavin and lumichrome, and can also bind coenzyme A. This Thermus thermophilus (strain ATCC 27634 / DSM 579 / HB8) protein is Dodecin.